A 263-amino-acid polypeptide reads, in one-letter code: Putative TATA-binding protein pB263R (263 aa).

Belongs to the asfivirus B263R family.

In terms of biological role, putative TATA-binding protein. The sequence is that of Putative TATA-binding protein pB263R from African swine fever virus (isolate Warthog/Namibia/Wart80/1980) (ASFV).